The sequence spans 105 residues: uncharacterized protein (105 aa).

This is an uncharacterized protein from Rickettsia conorii (strain ATCC VR-613 / Malish 7).